The chain runs to 457 residues: tRNA modification GTPase MnmE (457 aa).

(6S)-5-formyl-5,6,7,8-tetrahydrofolate is bound by residues Arg-25, Glu-87, and Arg-126. Residues 223–377 (GISTAIIGRP…IEERINNLFF (155 aa)) enclose the TrmE-type G domain. Asn-233 contacts K(+). GTP-binding positions include 233 to 238 (NVGKSS), 252 to 258 (TDIAGTT), and 277 to 280 (DTAG). A Mg(2+)-binding site is contributed by Ser-237. 3 residues coordinate K(+): Thr-252, Ile-254, and Thr-257. Thr-258 is a binding site for Mg(2+). Lys-457 is a binding site for (6S)-5-formyl-5,6,7,8-tetrahydrofolate.

The protein belongs to the TRAFAC class TrmE-Era-EngA-EngB-Septin-like GTPase superfamily. TrmE GTPase family. Homodimer. Heterotetramer of two MnmE and two MnmG subunits. The cofactor is K(+).

It localises to the cytoplasm. Exhibits a very high intrinsic GTPase hydrolysis rate. Involved in the addition of a carboxymethylaminomethyl (cmnm) group at the wobble position (U34) of certain tRNAs, forming tRNA-cmnm(5)s(2)U34. In Streptococcus pneumoniae serotype 2 (strain D39 / NCTC 7466), this protein is tRNA modification GTPase MnmE.